Reading from the N-terminus, the 219-residue chain is Ribose-5-phosphate isomerase A (219 aa).

Residues 28–31, 81–84, and 94–97 each bind substrate; these read SGST, DGAD, and KGGG. The active-site Proton acceptor is the E103. Residue K121 coordinates substrate.

This sequence belongs to the ribose 5-phosphate isomerase family. Homodimer.

It catalyses the reaction aldehydo-D-ribose 5-phosphate = D-ribulose 5-phosphate. The protein operates within carbohydrate degradation; pentose phosphate pathway; D-ribose 5-phosphate from D-ribulose 5-phosphate (non-oxidative stage): step 1/1. In terms of biological role, catalyzes the reversible conversion of ribose-5-phosphate to ribulose 5-phosphate. In Actinobacillus pleuropneumoniae serotype 3 (strain JL03), this protein is Ribose-5-phosphate isomerase A.